Here is a 391-residue protein sequence, read N- to C-terminus: S-adenosylmethionine synthase (391 aa).

Histidine 14 provides a ligand contact to ATP. Aspartate 16 serves as a coordination point for Mg(2+). K(+) is bound at residue glutamate 42. 2 residues coordinate L-methionine: glutamate 55 and glutamine 98. The tract at residues glutamine 98–glutamate 108 is flexible loop. Residues aspartate 172–lysine 174, arginine 238–phenylalanine 239, aspartate 247, arginine 253–lysine 254, alanine 270, and lysine 274 contribute to the ATP site. Aspartate 247 is a binding site for L-methionine. Lysine 278 is an L-methionine binding site.

It belongs to the AdoMet synthase family. As to quaternary structure, homotetramer; dimer of dimers. Mg(2+) is required as a cofactor. It depends on K(+) as a cofactor.

It localises to the cytoplasm. The catalysed reaction is L-methionine + ATP + H2O = S-adenosyl-L-methionine + phosphate + diphosphate. The protein operates within amino-acid biosynthesis; S-adenosyl-L-methionine biosynthesis; S-adenosyl-L-methionine from L-methionine: step 1/1. Its function is as follows. Catalyzes the formation of S-adenosylmethionine (AdoMet) from methionine and ATP. The overall synthetic reaction is composed of two sequential steps, AdoMet formation and the subsequent tripolyphosphate hydrolysis which occurs prior to release of AdoMet from the enzyme. The sequence is that of S-adenosylmethionine synthase from Clostridium tetani (strain Massachusetts / E88).